The sequence spans 431 residues: ATP-dependent RNA helicase DBP8 (431 aa).

The Q motif signature appears at 2–30 (ADFKSLGLSKWLTESLRAMKITQPTAIQK). A Helicase ATP-binding domain is found at 33–209 (IPKILEGRDC…NAPVQKGKPP (177 aa)). 46 to 53 (AKTGSGKT) is a binding site for ATP. The short motif at 155–158 (DEAD) is the DEAD box element. The region spanning 242–389 (YLYQLLTCEE…TNKVHDTAVI (148 aa)) is the Helicase C-terminal domain. The tract at residues 404–431 (LMAMQKENFGERKRQQKKKQNDGKSLRS) is disordered. Positions 411–431 (NFGERKRQQKKKQNDGKSLRS) are enriched in basic and acidic residues.

It belongs to the DEAD box helicase family. DDX49/DBP8 subfamily. Interacts with ESF2.

It is found in the nucleus. The protein resides in the nucleolus. It catalyses the reaction ATP + H2O = ADP + phosphate + H(+). Its function is as follows. ATP-binding RNA helicase involved in 40S ribosomal subunit biogenesis and is required for the normal formation of 18S rRNAs through pre-rRNA processing at A0, A1 and A2 sites. Required for vegetative growth. The polypeptide is ATP-dependent RNA helicase DBP8 (DBP8) (Saccharomyces cerevisiae (strain YJM789) (Baker's yeast)).